Consider the following 528-residue polypeptide: Tyrosine-protein kinase transforming protein Yes (528 aa).

The segment covering 1–12 has biased composition (basic and acidic residues); sequence DKGPAMKYRTDN. The tract at residues 1–35 is disordered; sequence DKGPAMKYRTDNTPEPISSHVSHYGSDSSQATQSP. The span at 18-29 shows a compositional bias: low complexity; it reads SSHVSHYGSDSS. The SH3 domain occupies 81 to 142; that stretch reads GGGTVFVALY…PSNYVAPADS (62 aa). Positions 148-245 constitute an SH2 domain; that stretch reads WYFGKMGRKD…GLCHKLTTVC (98 aa). The Protein kinase domain maps to 267–520; the sequence is LRLEVKLGQG…YIQSFLEDYF (254 aa). ATP is bound by residues 273 to 281 and lysine 295; that span reads LGQGCFGEV. The active-site Proton acceptor is aspartate 386. A Phosphotyrosine; by autocatalysis modification is found at tyrosine 416.

Belongs to the protein kinase superfamily. Tyr protein kinase family. SRC subfamily.

It catalyses the reaction L-tyrosyl-[protein] + ATP = O-phospho-L-tyrosyl-[protein] + ADP + H(+). The chain is Tyrosine-protein kinase transforming protein Yes (V-YES) from Galliformes (Y73SV).